The following is a 310-amino-acid chain: DNA repair nuclease APEX1 (310 aa).

The tract at residues 1–51 (MPKRAKKNEEGVDGEADNGTAAAKKEKKGKEPEAPILYEDPPEKLTSKDGR) is disordered. Over residues 41–51 (PPEKLTSKDGR) the composition is skewed to basic and acidic residues. The Mg(2+) site is built by D63 and E89. Y164 is an active-site residue. D203, N205, and D300 together coordinate Mg(2+). The Proton donor/acceptor role is filled by D203.

This sequence belongs to the DNA repair enzymes AP/ExoA family. Requires Mg(2+) as cofactor. Mn(2+) is required as a cofactor.

It localises to the nucleus. The protein localises to the nucleolus. Its subcellular location is the nucleus speckle. The protein resides in the endoplasmic reticulum. It is found in the cytoplasm. It localises to the mitochondrion. The catalysed reaction is Exonucleolytic cleavage in the 3'- to 5'-direction to yield nucleoside 5'-phosphates.. Functions as an apurinic/apyrimidinic (AP) endodeoxyribonuclease in the DNA base excision repair (BER) pathway of DNA lesions induced by oxidative and alkylating agents. Initiates repair of AP sites in DNA by catalyzing hydrolytic incision of the phosphodiester backbone immediately adjacent to the damage, generating a single-strand break with 5'-deoxyribose phosphate and 3'-hydroxyl ends. Has 3'-5' exoribonuclease activity on mismatched deoxyribonucleotides at the 3' termini of nicked or gapped DNA molecules during short-patch BER. May also play a role in the epigenetic regulation of gene expression by participating in DNA demethylation. Required for passage through the mid-blastula transition MBT. May also act as an endoribonuclease involved in the control of single-stranded RNA metabolism. Has no redox activity. Binds DNA and RNA. The sequence is that of DNA repair nuclease APEX1 (apex1) from Danio rerio (Zebrafish).